Consider the following 63-residue polypeptide: Large ribosomal subunit protein uL29 (63 aa).

The protein belongs to the universal ribosomal protein uL29 family.

The polypeptide is Large ribosomal subunit protein uL29 (Proteus mirabilis (strain HI4320)).